The chain runs to 257 residues: Large ribosomal subunit protein uL2 (257 aa).

The interval 207–231 is disordered; that stretch reads VEHPFGGGNHQHIGKPSTIRRDAPA.

The protein belongs to the universal ribosomal protein uL2 family. In terms of assembly, component of the large ribosomal subunit.

Its subcellular location is the cytoplasm. In terms of biological role, component of the large ribosomal subunit. The ribosome is a large ribonucleoprotein complex responsible for the synthesis of proteins in the cell. The polypeptide is Large ribosomal subunit protein uL2 (rpl8) (Xenopus laevis (African clawed frog)).